A 270-amino-acid chain; its full sequence is L-fucose dehydrogenase (270 aa).

The NAD(+) site is built by arginine 19, isoleucine 21, aspartate 40, lysine 41, aspartate 62, valine 63, asparagine 89, tyrosine 154, lysine 158, isoleucine 187, threonine 189, and leucine 191.

Belongs to the short-chain dehydrogenases/reductases (SDR) family.

The catalysed reaction is L-fucose + NAD(+) = L-fucono-1,5-lactone + NADH + H(+). It catalyses the reaction D-arabinose + NAD(+) = D-arabinono-1,5-lactone + NADH + H(+). The enzyme catalyses L-galactose + NAD(+) = L-galactono-1,5-lactone + NADH + H(+). Functionally, catalyzes the NAD(+)-dependent oxidation of L-fucose, yielding L-fucono-1,5-lactone, which rapidly converts spontaneously to L-fucone-1,4-lactone. Does not use NADPH. Displays low activity on L-fucose, D-arabinose and L-galactose compared with rabbit and human. This is consitent with the low L-fucose metabolism observed in this species. The protein is L-fucose dehydrogenase (Hsd17b14) of Rattus norvegicus (Rat).